Here is a 101-residue protein sequence, read N- to C-terminus: Small ribosomal subunit protein uS14 (101 aa).

This sequence belongs to the universal ribosomal protein uS14 family. In terms of assembly, part of the 30S ribosomal subunit. Contacts proteins S3 and S10.

Functionally, binds 16S rRNA, required for the assembly of 30S particles and may also be responsible for determining the conformation of the 16S rRNA at the A site. This chain is Small ribosomal subunit protein uS14, found in Rhizorhabdus wittichii (strain DSM 6014 / CCUG 31198 / JCM 15750 / NBRC 105917 / EY 4224 / RW1) (Sphingomonas wittichii).